A 245-amino-acid polypeptide reads, in one-letter code: MADS-box transcription factor 55 (245 aa).

In terms of domain architecture, MADS-box spans 1-61 (MARERREIRR…GKLSQFASSN (61 aa)). Residues 109-199 (LQLEHSKCSS…RDQMPQVPTA (91 aa)) enclose the K-box domain. The interval 197-245 (PTAGLAVPDTENVLTEDGQSSESVMTALNSGSSQDNDDGSDISLKLGLP) is disordered. Residues 213–224 (DGQSSESVMTAL) are compositionally biased toward polar residues.

Expressed in roots, shoots and developing panicles. Expressed in shoots.

It localises to the nucleus. In terms of biological role, transcription factor that acts as a negative regulator of brassinosteroid signaling. This Oryza sativa subsp. japonica (Rice) protein is MADS-box transcription factor 55 (MADS55).